Consider the following 247-residue polypeptide: DNA polymerase sliding clamp (247 aa).

It belongs to the PCNA family. Homotrimer. The subunits circularize to form a toroid; DNA passes through its center. Replication factor C (RFC) is required to load the toroid on the DNA.

Its function is as follows. Sliding clamp subunit that acts as a moving platform for DNA processing. Responsible for tethering the catalytic subunit of DNA polymerase and other proteins to DNA during high-speed replication. This Thermofilum pendens (strain DSM 2475 / Hrk 5) protein is DNA polymerase sliding clamp.